The primary structure comprises 473 residues: Photosystem II CP43 reaction center protein (473 aa).

Positions 1-14 are excised as a propeptide; the sequence is MKTLYSLRRFYHVE. T15 is modified (N-acetylthreonine). At T15 the chain carries Phosphothreonine. Transmembrane regions (helical) follow at residues 69 to 93, 134 to 155, 178 to 200, 255 to 275, and 291 to 312; these read LFEVAHFVPEKPMYEQGLILLPHLA, LLGPETLEESFPFFGYVWKDRN, KALYFGGVYDTWAPGGGDVRKIT, KPFAWARRAFVWSGEAYLSYS, and WFNNTAYPSEFYGPTGPEASQA. Position 367 (E367) interacts with [CaMn4O5] cluster. Residues 447-471 traverse the membrane as a helical segment; that stretch reads RARAAAAGFEKGIDRDFEPVLSMTP.

It belongs to the PsbB/PsbC family. PsbC subfamily. As to quaternary structure, PSII is composed of 1 copy each of membrane proteins PsbA, PsbB, PsbC, PsbD, PsbE, PsbF, PsbH, PsbI, PsbJ, PsbK, PsbL, PsbM, PsbT, PsbX, PsbY, PsbZ, Psb30/Ycf12, at least 3 peripheral proteins of the oxygen-evolving complex and a large number of cofactors. It forms dimeric complexes. Binds multiple chlorophylls and provides some of the ligands for the Ca-4Mn-5O cluster of the oxygen-evolving complex. It may also provide a ligand for a Cl- that is required for oxygen evolution. PSII binds additional chlorophylls, carotenoids and specific lipids. is required as a cofactor.

It is found in the plastid. Its subcellular location is the chloroplast thylakoid membrane. Its function is as follows. One of the components of the core complex of photosystem II (PSII). It binds chlorophyll and helps catalyze the primary light-induced photochemical processes of PSII. PSII is a light-driven water:plastoquinone oxidoreductase, using light energy to abstract electrons from H(2)O, generating O(2) and a proton gradient subsequently used for ATP formation. In Ipomoea purpurea (Common morning glory), this protein is Photosystem II CP43 reaction center protein.